The following is a 121-amino-acid chain: Small ribosomal subunit protein uS13 (121 aa).

The disordered stretch occupies residues 97–121 (VRGQRTRTNARTRRGARKTVAGKKK). Basic residues predominate over residues 100–121 (QRTRTNARTRRGARKTVAGKKK).

Belongs to the universal ribosomal protein uS13 family. Part of the 30S ribosomal subunit. Forms a loose heterodimer with protein S19. Forms two bridges to the 50S subunit in the 70S ribosome.

Located at the top of the head of the 30S subunit, it contacts several helices of the 16S rRNA. In the 70S ribosome it contacts the 23S rRNA (bridge B1a) and protein L5 of the 50S subunit (bridge B1b), connecting the 2 subunits; these bridges are implicated in subunit movement. Contacts the tRNAs in the A and P-sites. This is Small ribosomal subunit protein uS13 from Synechococcus sp. (strain WH7803).